Consider the following 333-residue polypeptide: D-fructose 1,6-bisphosphatase class 2/sedoheptulose 1,7-bisphosphatase (333 aa).

Mn(2+) contacts are provided by D33, E57, D85, and E88. Residues E88–T90, Y119, R164–R166, and D186–D188 contribute to the substrate site. E213 contributes to the Mn(2+) binding site.

The protein belongs to the FBPase class 2 family. Homotetramer. Mn(2+) serves as cofactor.

It catalyses the reaction beta-D-fructose 1,6-bisphosphate + H2O = beta-D-fructose 6-phosphate + phosphate. The enzyme catalyses D-sedoheptulose 1,7-bisphosphate + H2O = D-sedoheptulose 7-phosphate + phosphate. It functions in the pathway carbohydrate biosynthesis; Calvin cycle. Functionally, catalyzes the hydrolysis of fructose 1,6-bisphosphate (Fru 1,6-P2) and sedoheptulose 1,7-bisphosphate (Sed 1,7-P2) to fructose 6-phosphate and sedoheptulose 7-phosphate, respectively. This Prochlorococcus marinus (strain AS9601) protein is D-fructose 1,6-bisphosphatase class 2/sedoheptulose 1,7-bisphosphatase.